Consider the following 237-residue polypeptide: Undecaprenyl-diphosphatase (237 aa).

The next 7 helical transmembrane spans lie at 38–58 (QTAV…LDGI), 65–85 (WRII…GVLF), 92–112 (LFSS…ILMF), 126–146 (MSFL…FPGI), 166–186 (ALQY…ILGL), 191–211 (VTIL…YVLS), and 217–237 (GKIW…YLAG).

Belongs to the UppP family.

The protein localises to the cell inner membrane. The catalysed reaction is di-trans,octa-cis-undecaprenyl diphosphate + H2O = di-trans,octa-cis-undecaprenyl phosphate + phosphate + H(+). Its function is as follows. Catalyzes the dephosphorylation of undecaprenyl diphosphate (UPP). Confers resistance to bacitracin. This is Undecaprenyl-diphosphatase from Thermotoga maritima (strain ATCC 43589 / DSM 3109 / JCM 10099 / NBRC 100826 / MSB8).